The chain runs to 494 residues: Fumigaclavine B O-acetyltransferase easN (494 aa).

Belongs to the fumigaclavine B O-acetyltransferase family. As to quaternary structure, monomer.

It catalyses the reaction fumigaclavine B + acetyl-CoA = fumigaclavine A + CoA. It participates in alkaloid biosynthesis; ergot alkaloid biosynthesis. Fumigaclavine B O-acetyltransferase; part of the gene cluster that mediates the biosynthesis of fumiclavanine C, a fungal ergot alkaloid. DmaW catalyzes the first step of ergot alkaloid biosynthesis by condensing dimethylallyl diphosphate (DMAP) and tryptophan to form 4-dimethylallyl-L-tryptophan. The second step is catalyzed by the methyltransferase easF that methylates 4-dimethylallyl-L-tryptophan in the presence of S-adenosyl-L-methionine, resulting in the formation of 4-dimethylallyl-L-abrine. The catalase easC and the FAD-dependent oxidoreductase easE then transform 4-dimethylallyl-L-abrine to chanoclavine-I which is further oxidized by EasD in the presence of NAD(+), resulting in the formation of chanoclavine-I aldehyde. EasA reduces chanoclavine-I aldehyde to dihydrochanoclavine-I aldehyde that spontaneously dehydrates to form 6,8-dimethyl-6,7-didehydroergoline. EasG then catalyzes the reduction of 6,8-dimethyl-6,7-didehydroergoline to form festuclavine. Hydrolysis of festuclavine by easM then leads to the formation of fumigaclavine B which is in turn acetylated by easN to fumigaclavine A. Finally, easL catalyzes the conversion of fumigaclavine A into fumigaclavine C by attaching a dimethylallyl moiety to C-2 of the indole nucleus. This chain is Fumigaclavine B O-acetyltransferase easN, found in Aspergillus fumigatus (strain ATCC MYA-4609 / CBS 101355 / FGSC A1100 / Af293) (Neosartorya fumigata).